The chain runs to 190 residues: Putative 3-methyladenine DNA glycosylase (190 aa).

The protein belongs to the DNA glycosylase MPG family.

The polypeptide is Putative 3-methyladenine DNA glycosylase (Corynebacterium efficiens (strain DSM 44549 / YS-314 / AJ 12310 / JCM 11189 / NBRC 100395)).